The primary structure comprises 738 residues: Outer membrane protein assembly factor BamA (738 aa).

A signal peptide spans 1–13 (MVWLLFLSSFCFA). 5 POTRA domains span residues 14-81 (DEVV…LQEN), 82-159 (PILR…VKEA), 162-248 (TVIR…LKEG), 251-329 (YSFG…VVST), and 332-404 (YRIR…VKER).

This sequence belongs to the BamA family. As to quaternary structure, part of the Bam complex.

It localises to the cell outer membrane. Functionally, part of the outer membrane protein assembly complex, which is involved in assembly and insertion of beta-barrel proteins into the outer membrane. The sequence is that of Outer membrane protein assembly factor BamA from Neorickettsia risticii (strain Illinois).